We begin with the raw amino-acid sequence, 214 residues long: Late embryogenesis abundant protein At1g64065 (214 aa).

The chain crosses the membrane as a helical span at residues 41-61 (VYSLTIIVIIFALCLILSSIF).

It belongs to the LEA type 2 family.

The protein localises to the membrane. In Arabidopsis thaliana (Mouse-ear cress), this protein is Late embryogenesis abundant protein At1g64065.